The chain runs to 164 residues: Endoribonuclease YbeY (164 aa).

Zn(2+) is bound by residues histidine 117, histidine 121, and histidine 127.

Belongs to the endoribonuclease YbeY family. Zn(2+) serves as cofactor.

Its subcellular location is the cytoplasm. Single strand-specific metallo-endoribonuclease involved in late-stage 70S ribosome quality control and in maturation of the 3' terminus of the 16S rRNA. The chain is Endoribonuclease YbeY from Mycoplasma mycoides subsp. mycoides SC (strain CCUG 32753 / NCTC 10114 / PG1).